We begin with the raw amino-acid sequence, 184 residues long: MMSQTAKVLLLYAHPESQDSVANRVLLKPALQLPNVTVHDLYAHYPDFFIDISHEQALLRDHDVIVFQFPLYTYSCPALLKEWFDRVLSRGFASGVGGNQLAGKYWRCVITTGEPETAYRPDGFNRYALSDILRPFELTAAMCRMHWMTPLIIYWARRQSLSELASHGRAYERWLADPLTPGGF.

The protein belongs to the NAD(P)H dehydrogenase (quinone) family. KefG subfamily. In terms of assembly, interacts with KefB.

It is found in the cell inner membrane. It carries out the reaction a quinone + NADH + H(+) = a quinol + NAD(+). The catalysed reaction is a quinone + NADPH + H(+) = a quinol + NADP(+). In terms of biological role, regulatory subunit of a potassium efflux system that confers protection against electrophiles. Required for full activity of KefB. The chain is Glutathione-regulated potassium-efflux system ancillary protein KefG from Cronobacter sakazakii (strain ATCC BAA-894) (Enterobacter sakazakii).